The chain runs to 233 residues: Orotidine 5'-phosphate decarboxylase (233 aa).

Substrate contacts are provided by residues Asp13, Lys35, 62–71, Thr122, Arg182, Gln191, Gly211, and Arg212; that span reads DLKFHDIPNT. Lys64 acts as the Proton donor in catalysis.

The protein belongs to the OMP decarboxylase family. Type 1 subfamily. As to quaternary structure, homodimer.

It carries out the reaction orotidine 5'-phosphate + H(+) = UMP + CO2. The protein operates within pyrimidine metabolism; UMP biosynthesis via de novo pathway; UMP from orotate: step 2/2. Catalyzes the decarboxylation of orotidine 5'-monophosphate (OMP) to uridine 5'-monophosphate (UMP). This is Orotidine 5'-phosphate decarboxylase from Pseudomonas putida (strain GB-1).